A 187-amino-acid chain; its full sequence is UPF0301 protein lpl0620 (187 aa).

This sequence belongs to the UPF0301 (AlgH) family.

The chain is UPF0301 protein lpl0620 from Legionella pneumophila (strain Lens).